Reading from the N-terminus, the 122-residue chain is MEPLGNRRPCSVCITKNRNCPRFCEYAEYFPYELQSQYESANELFGTPNIITMMQHAPEEKKQMLATSIIMEGNAWTEDPISGGFGMIQKLMWKIMLHKAYLRELQEKIKEEKEKKPASSLY.

Positions 8–109 (RPCSVCITKN…AYLRELQEKI (102 aa)) constitute an LOB domain.

The protein belongs to the LOB domain-containing protein family.

The protein is LOB domain-containing protein 5 (LBD5) of Arabidopsis thaliana (Mouse-ear cress).